The chain runs to 412 residues: UPF0761 membrane protein lpg0643 (412 aa).

A run of 6 helical transmembrane segments spans residues 36-56 (ALAFTSLLAVVPLMSVGLAIF), 99-119 (LSIWGIVFLIFTALLVMFTIE), 137-157 (AFLLYWAIISLAPVLLGLSLA), 177-197 (ILHYSPFFLSLIGFTFLYVVV), 210-230 (GGLVAAILFESAKHAFAYYLI), and 241-261 (AFATVPIFFIWVYWVWIITLL).

It belongs to the UPF0761 family.

The protein resides in the cell inner membrane. The polypeptide is UPF0761 membrane protein lpg0643 (Legionella pneumophila subsp. pneumophila (strain Philadelphia 1 / ATCC 33152 / DSM 7513)).